The primary structure comprises 375 residues: Alcohol dehydrogenase 1B (375 aa).

Position 1 is an N-acetylserine (serine 1). The Zn(2+) site is built by cysteine 46, histidine 67, cysteine 97, cysteine 100, cysteine 103, cysteine 111, and cysteine 174. NAD(+)-binding positions include 199–204, aspartate 223, lysine 228, 293–295, and arginine 370; these read GLGGVG and VGV.

The protein belongs to the zinc-containing alcohol dehydrogenase family. Class-I subfamily. In terms of assembly, multimeric (with different ratios of monomers). Requires Zn(2+) as cofactor.

Its subcellular location is the cytoplasm. The catalysed reaction is a primary alcohol + NAD(+) = an aldehyde + NADH + H(+). It catalyses the reaction a secondary alcohol + NAD(+) = a ketone + NADH + H(+). This chain is Alcohol dehydrogenase 1B, found in Saara hardwickii (Indian spiny-tailed lizard).